A 314-amino-acid chain; its full sequence is Mycothiol acetyltransferase (314 aa).

N-acetyltransferase domains lie at 18–156 (ATIR…RPLA) and 168–314 (IRIA…MYQL). Glutamate 38 is a 1D-myo-inositol 2-(L-cysteinylamino)-2-deoxy-alpha-D-glucopyranoside binding site. Residue 92–94 (VVV) participates in acetyl-CoA binding. 1D-myo-inositol 2-(L-cysteinylamino)-2-deoxy-alpha-D-glucopyranoside contacts are provided by glutamate 195, lysine 234, and glutamate 248. Acetyl-CoA-binding positions include 252–254 (VGL) and 259–265 (QGHGLGR). Tyrosine 286 is a binding site for 1D-myo-inositol 2-(L-cysteinylamino)-2-deoxy-alpha-D-glucopyranoside.

Belongs to the acetyltransferase family. MshD subfamily. Monomer.

It carries out the reaction 1D-myo-inositol 2-(L-cysteinylamino)-2-deoxy-alpha-D-glucopyranoside + acetyl-CoA = mycothiol + CoA + H(+). Its function is as follows. Catalyzes the transfer of acetyl from acetyl-CoA to desacetylmycothiol (Cys-GlcN-Ins) to form mycothiol. The sequence is that of Mycothiol acetyltransferase from Catenulispora acidiphila (strain DSM 44928 / JCM 14897 / NBRC 102108 / NRRL B-24433 / ID139908).